A 59-amino-acid chain; its full sequence is Large ribosomal subunit protein bL32c (59 aa).

Positions 37-59 (SRSFSSGNEHPKPKGFSGQQANK) are disordered.

It belongs to the bacterial ribosomal protein bL32 family.

It is found in the plastid. It localises to the chloroplast. The sequence is that of Large ribosomal subunit protein bL32c from Saccharum hybrid (Sugarcane).